The following is a 417-amino-acid chain: Valine--pyruvate aminotransferase (417 aa).

Lys-249 carries the post-translational modification N6-(pyridoxal phosphate)lysine.

The protein belongs to the class-I pyridoxal-phosphate-dependent aminotransferase family. As to quaternary structure, homodimer. It depends on pyridoxal 5'-phosphate as a cofactor.

It localises to the cytoplasm. It carries out the reaction L-valine + pyruvate = 3-methyl-2-oxobutanoate + L-alanine. In terms of biological role, involved in the biosynthesis of alanine. This chain is Valine--pyruvate aminotransferase (avtA), found in Escherichia coli (strain K12).